Reading from the N-terminus, the 213-residue chain is Putative tRNA methyltransferase MPN_351 (213 aa).

Belongs to the TrmK family.

The protein resides in the cytoplasm. The sequence is that of Putative tRNA methyltransferase MPN_351 from Mycoplasma pneumoniae (strain ATCC 29342 / M129 / Subtype 1) (Mycoplasmoides pneumoniae).